A 357-amino-acid polypeptide reads, in one-letter code: Holliday junction branch migration complex subunit RuvB (357 aa).

Positions 1 to 15 (MAIQSDSLSSLPDSP) are enriched in low complexity. Positions 1-30 (MAIQSDSLSSLPDSPRIVAPQPVSPNEESI) are disordered. The segment at 13–195 (DSPRIVAPQP…FGIVSRLEFY (183 aa)) is large ATPase domain (RuvB-L). ATP contacts are provided by residues leucine 34, arginine 35, glycine 76, lysine 79, threonine 80, threonine 81, 142 to 144 (EDF), arginine 185, tyrosine 195, and arginine 232. Residue threonine 80 participates in Mg(2+) binding. The interval 196-266 (NTDELARIVT…AAGRALAMLD (71 aa)) is small ATPAse domain (RuvB-S). A head domain (RuvB-H) region spans residues 269–357 (PQGLDVMDRK…SGGTGELFSK (89 aa)). Residues arginine 305, arginine 324, and arginine 329 each contribute to the DNA site.

It belongs to the RuvB family. Homohexamer. Forms an RuvA(8)-RuvB(12)-Holliday junction (HJ) complex. HJ DNA is sandwiched between 2 RuvA tetramers; dsDNA enters through RuvA and exits via RuvB. An RuvB hexamer assembles on each DNA strand where it exits the tetramer. Each RuvB hexamer is contacted by two RuvA subunits (via domain III) on 2 adjacent RuvB subunits; this complex drives branch migration. In the full resolvosome a probable DNA-RuvA(4)-RuvB(12)-RuvC(2) complex forms which resolves the HJ.

The protein resides in the cytoplasm. The catalysed reaction is ATP + H2O = ADP + phosphate + H(+). Functionally, the RuvA-RuvB-RuvC complex processes Holliday junction (HJ) DNA during genetic recombination and DNA repair, while the RuvA-RuvB complex plays an important role in the rescue of blocked DNA replication forks via replication fork reversal (RFR). RuvA specifically binds to HJ cruciform DNA, conferring on it an open structure. The RuvB hexamer acts as an ATP-dependent pump, pulling dsDNA into and through the RuvAB complex. RuvB forms 2 homohexamers on either side of HJ DNA bound by 1 or 2 RuvA tetramers; 4 subunits per hexamer contact DNA at a time. Coordinated motions by a converter formed by DNA-disengaged RuvB subunits stimulates ATP hydrolysis and nucleotide exchange. Immobilization of the converter enables RuvB to convert the ATP-contained energy into a lever motion, pulling 2 nucleotides of DNA out of the RuvA tetramer per ATP hydrolyzed, thus driving DNA branch migration. The RuvB motors rotate together with the DNA substrate, which together with the progressing nucleotide cycle form the mechanistic basis for DNA recombination by continuous HJ branch migration. Branch migration allows RuvC to scan DNA until it finds its consensus sequence, where it cleaves and resolves cruciform DNA. This is Holliday junction branch migration complex subunit RuvB from Bordetella parapertussis (strain 12822 / ATCC BAA-587 / NCTC 13253).